Reading from the N-terminus, the 157-residue chain is NudC domain-containing protein 2 (157 aa).

Position 2 is an N-acetylserine (Ser2). In terms of domain architecture, CS spans 14–104; it reads CGTPWGQWYQ…DAANCWTSLL (91 aa). A disordered region spans residues 134–157; it reads FDFSGAEISGNYTKGGPDFSNLEK. Ser142 is subject to Phosphoserine. At Tyr145 the chain carries Phosphotyrosine.

As to quaternary structure, interacts with LIS1.

It is found in the chromosome. It localises to the centromere. Its subcellular location is the kinetochore. The protein resides in the cytoplasm. The protein localises to the cytoskeleton. It is found in the microtubule organizing center. It localises to the centrosome. Its subcellular location is the spindle pole. Functionally, may regulate the LIS1/dynein pathway by stabilizing LIS1 with Hsp90 chaperone. The chain is NudC domain-containing protein 2 (Nudcd2) from Mus musculus (Mouse).